We begin with the raw amino-acid sequence, 89 residues long: Calsenilin isoform 4 (89 aa).

Residues S27–G57 are disordered.

In terms of tissue distribution, isoform 1 or isoform 4 (T+ forms) are expressed at equal levels with isoform 2 or isoform 3 (T- forms) in brain.

Its function is as follows. Unknown for isoform 4. Csen is involved in calcium-dependent transcriptional repression, regulation of potassium channels, and perhaps in processing of PSEN2 and apoptosis. The sequence is that of Calsenilin isoform 4 (Kcnip3) from Mus musculus (Mouse).